The following is a 562-amino-acid chain: NAD-dependent malic enzyme (562 aa).

The active-site Proton donor is the Tyr101. Arg154 lines the NAD(+) pocket. The active-site Proton acceptor is Lys172. Positions 243, 244, and 267 each coordinate a divalent metal cation. Residues Asp267 and Asn415 each coordinate NAD(+).

Belongs to the malic enzymes family. Homotetramer. Requires Mg(2+) as cofactor. Mn(2+) serves as cofactor.

It carries out the reaction (S)-malate + NAD(+) = pyruvate + CO2 + NADH. The catalysed reaction is oxaloacetate + H(+) = pyruvate + CO2. This Idiomarina loihiensis (strain ATCC BAA-735 / DSM 15497 / L2-TR) protein is NAD-dependent malic enzyme.